A 375-amino-acid polypeptide reads, in one-letter code: Neuropeptide Y receptor type 4 (375 aa).

At 1-39 the chain is on the extracellular side; it reads MNTSHLMASLSPAFLQGKNGTNPLDSLYNLSDGCQDSAD. N-linked (GlcNAc...) asparagine glycosylation is found at asparagine 2, asparagine 19, and asparagine 29. Residues 40-60 form a helical membrane-spanning segment; the sequence is LLAFIITTYSVETVLGVLGNL. At 61–78 the chain is on the cytoplasmic side; it reads CLIFVTTRQKEKSNVTNL. The chain crosses the membrane as a helical span at residues 79-99; it reads LIANLAFSDFLMCLICQPLTV. Topologically, residues 100-116 are extracellular; sequence TYTIMDYWIFGEVLCKM. Residues cysteine 114 and cysteine 201 are joined by a disulfide bond. Residues 117-137 form a helical membrane-spanning segment; that stretch reads LTFIQCMSVTVSILSLVLVAL. Residues 138–155 are Cytoplasmic-facing; sequence ERHQLIINPTGWKPSISQ. Residues 156 to 176 form a helical membrane-spanning segment; that stretch reads AYLGIVVIWFISCFLSLPFLA. At 177 to 211 the chain is on the extracellular side; the sequence is NSILNDLFHYNHSKVVEFLEDKVVCFVSWSSDHHR. N-linked (GlcNAc...) asparagine glycosylation is present at asparagine 187. Residues 212-232 form a helical membrane-spanning segment; sequence LIYTTFLLLFQYCVPLAFILV. The Cytoplasmic portion of the chain corresponds to 233-262; it reads CYMRIYQRLQRQRRAFHTHTCSSRVGQMKR. Residues 263 to 283 traverse the membrane as a helical segment; it reads INGMLMAMVTAFAVLWLPLHV. The Extracellular portion of the chain corresponds to 284-301; the sequence is FNTLEDWYQEAIPACHGN. Residues 302-322 form a helical membrane-spanning segment; that stretch reads LIFLMCHLFAMASTCVNPFIY. The Cytoplasmic portion of the chain corresponds to 323 to 375; the sequence is GFLNINFKKDIKALVLTCRCRPPQGEPEPLPLSTVHTDLSKGSMRMGSKSNVM. Cysteine 340 carries the S-palmitoyl cysteine lipid modification.

This sequence belongs to the G-protein coupled receptor 1 family. As to expression, detected in colon and brain.

The protein localises to the cell membrane. G protein-coupled receptor for PPY/pancreatic polypeptide/PP that is negatively coupled to cAMP. Has much lower affinity for the NPY/neuropeptide Y and PYY/peptide YY. This chain is Neuropeptide Y receptor type 4 (Npy4r), found in Rattus norvegicus (Rat).